The primary structure comprises 90 residues: Large ribosomal subunit protein uL16c (90 aa).

Belongs to the universal ribosomal protein uL16 family. In terms of assembly, part of the 50S ribosomal subunit.

It is found in the plastid. Its subcellular location is the chloroplast. This is Large ribosomal subunit protein uL16c (rpl16) from Oenothera ammophila (Evening primerose).